The sequence spans 325 residues: Heat-inducible transcription repressor HrcA (325 aa).

It belongs to the HrcA family.

Negative regulator of class I heat shock genes (grpE-dnaK-dnaJ and groELS operons). Prevents heat-shock induction of these operons. In Staphylococcus aureus (strain JH1), this protein is Heat-inducible transcription repressor HrcA.